The primary structure comprises 392 residues: Gastricsin (392 aa).

Positions 1-16 (MKWMVVALLCLPLLEA) are cleaved as a signal peptide. Residues 17 to 62 (ALIRVPLKKMKSIRETMKEQGVLKDFLKNHKYDPGQKYHFGKFGDY) constitute a propeptide, activation peptide. The region spanning 76–389 (YYGEISIGTP…DMGNNRVGLA (314 aa)) is the Peptidase A1 domain. The active site involves Asp-94. 2 disulfides stabilise this stretch: Cys-107-Cys-112 and Cys-270-Cys-275. Asp-280 is an active-site residue. The cysteines at positions 314 and 347 are disulfide-linked.

The protein belongs to the peptidase A1 family.

The protein resides in the secreted. It catalyses the reaction More restricted specificity than pepsin A, but shows preferential cleavage at Tyr-|-Xaa bonds. High activity on hemoglobin.. In terms of biological role, hydrolyzes a variety of proteins. This is Gastricsin (Pgc) from Mus musculus (Mouse).